Here is a 338-residue protein sequence, read N- to C-terminus: Phenylalanine--tRNA ligase alpha subunit (338 aa).

E253 provides a ligand contact to Mg(2+).

Belongs to the class-II aminoacyl-tRNA synthetase family. Phe-tRNA synthetase alpha subunit type 1 subfamily. In terms of assembly, tetramer of two alpha and two beta subunits. Requires Mg(2+) as cofactor.

The protein localises to the cytoplasm. It catalyses the reaction tRNA(Phe) + L-phenylalanine + ATP = L-phenylalanyl-tRNA(Phe) + AMP + diphosphate + H(+). The polypeptide is Phenylalanine--tRNA ligase alpha subunit (Geotalea uraniireducens (strain Rf4) (Geobacter uraniireducens)).